A 284-amino-acid polypeptide reads, in one-letter code: Tropomyosin (284 aa).

Residues 1–284 adopt a coiled-coil conformation; sequence MDAIKKKMLA…DQTFAELAGY (284 aa). Residues 202-213 show a composition bias toward polar residues; that stretch reads NNTKSLEISEQE. Residues 202 to 223 are disordered; it reads NNTKSLEISEQEASQREDSYEE. The segment covering 214–223 has biased composition (basic and acidic residues); it reads ASQREDSYEE.

This sequence belongs to the tropomyosin family. Homodimer.

Functionally, tropomyosin, in association with the troponin complex, plays a central role in the calcium dependent regulation of muscle contraction. The chain is Tropomyosin from Haliotis rufescens (California red abalone).